We begin with the raw amino-acid sequence, 264 residues long: S-adenosylmethionine decarboxylase proenzyme (264 aa).

The Schiff-base intermediate with substrate; via pyruvic acid role is filled by Ser-112. At Ser-112 the chain carries Pyruvic acid (Ser); by autocatalysis. The Proton acceptor; for processing activity role is filled by His-117. The Proton donor; for catalytic activity role is filled by Cys-140.

Belongs to the prokaryotic AdoMetDC family. Type 2 subfamily. In terms of assembly, heterooctamer of four alpha and four beta chains arranged as a tetramer of alpha/beta heterodimers. Pyruvate is required as a cofactor. Post-translationally, is synthesized initially as an inactive proenzyme. Formation of the active enzyme involves a self-maturation process in which the active site pyruvoyl group is generated from an internal serine residue via an autocatalytic post-translational modification. Two non-identical subunits are generated from the proenzyme in this reaction, and the pyruvate is formed at the N-terminus of the alpha chain, which is derived from the carboxyl end of the proenzyme. The post-translation cleavage follows an unusual pathway, termed non-hydrolytic serinolysis, in which the side chain hydroxyl group of the serine supplies its oxygen atom to form the C-terminus of the beta chain, while the remainder of the serine residue undergoes an oxidative deamination to produce ammonia and the pyruvoyl group blocking the N-terminus of the alpha chain.

It catalyses the reaction S-adenosyl-L-methionine + H(+) = S-adenosyl 3-(methylsulfanyl)propylamine + CO2. It functions in the pathway amine and polyamine biosynthesis; S-adenosylmethioninamine biosynthesis; S-adenosylmethioninamine from S-adenosyl-L-methionine: step 1/1. Its function is as follows. Catalyzes the decarboxylation of S-adenosylmethionine to S-adenosylmethioninamine (dcAdoMet), the propylamine donor required for the synthesis of the polyamines spermine and spermidine from the diamine putrescine. This chain is S-adenosylmethionine decarboxylase proenzyme, found in Yersinia pseudotuberculosis serotype I (strain IP32953).